Here is a 139-residue protein sequence, read N- to C-terminus: ATP synthase epsilon chain (139 aa).

Belongs to the ATPase epsilon chain family. In terms of assembly, F-type ATPases have 2 components, CF(1) - the catalytic core - and CF(0) - the membrane proton channel. CF(1) has five subunits: alpha(3), beta(3), gamma(1), delta(1), epsilon(1). CF(0) has three main subunits: a, b and c.

It is found in the cell inner membrane. Produces ATP from ADP in the presence of a proton gradient across the membrane. The sequence is that of ATP synthase epsilon chain from Escherichia coli O139:H28 (strain E24377A / ETEC).